The primary structure comprises 196 residues: MKLIIATHNPGKVKELEGMLTPLGFEVESLLDYPDAPETDETGTTFEENAALKATEAAAYFGHAVLADDSGLEVDALDGAPGVYSARFAGPEKSDEANNALLLEKLNGETNRTARFVCALCLAKPSGETLTVRGTIEGTIGYSPQGENGFGYDPLFIVPSLHKTAAELERDEKAVVSHRGQALRKLEAEIIPFMKG.

Position 7-12 (7-12 (THNPGK)) interacts with substrate. 2 residues coordinate Mg(2+): Asp40 and Asp69. Catalysis depends on Asp69, which acts as the Proton acceptor. Substrate-binding positions include Ser70, 150-153 (FGYD), Lys173, and 178-179 (HR).

The protein belongs to the HAM1 NTPase family. As to quaternary structure, homodimer. Mg(2+) serves as cofactor.

It catalyses the reaction XTP + H2O = XMP + diphosphate + H(+). It carries out the reaction dITP + H2O = dIMP + diphosphate + H(+). The enzyme catalyses ITP + H2O = IMP + diphosphate + H(+). Pyrophosphatase that catalyzes the hydrolysis of nucleoside triphosphates to their monophosphate derivatives, with a high preference for the non-canonical purine nucleotides XTP (xanthosine triphosphate), dITP (deoxyinosine triphosphate) and ITP. Seems to function as a house-cleaning enzyme that removes non-canonical purine nucleotides from the nucleotide pool, thus preventing their incorporation into DNA/RNA and avoiding chromosomal lesions. This Exiguobacterium sp. (strain ATCC BAA-1283 / AT1b) protein is dITP/XTP pyrophosphatase.